A 1312-amino-acid polypeptide reads, in one-letter code: Beta-N-acetylhexosaminidase (1312 aa).

A signal peptide spans 1 to 33 (MKHEKQQRFSIRKYAVGAASVLIGFAFQAQTVA). Over residues 38 to 59 (TPTTTENQPTIHTVSDSPQSSE) the composition is skewed to polar residues. Residues 38–178 (TPTTTENQPT…ATEAGKERAA (141 aa)) are disordered. The segment covering 118–177 (AEKETANKKAEEASPKKEEAKEVDSKESNTDKTDKDKPAKKDEAKAEADKPATEAGKERA) has biased composition (basic and acidic residues). 2 catalytic domain regions span residues 176-616 (RAAT…TPEA) and 621-1046 (EAKR…PAVT). G5 domains follow at residues 1059–1138 (NVET…GAPV) and 1150–1230 (TTEV…GTMV). The segment at 1244–1290 (EEKPKLEIPSQPAPSTAPAEESKVLPQDPAPVVTEKKLPETGTHDSA) is disordered. The span at 1277–1286 (TEKKLPETGT) shows a compositional bias: basic and acidic residues. Residues 1281–1285 (LPETG) carry the LPXTG sorting signal motif. T1284 is modified (pentaglycyl murein peptidoglycan amidated threonine). Positions 1285–1312 (GTHDSAGLVVAGLMSTLAAYGLTKRKED) are cleaved as a propeptide — removed by sortase.

It belongs to the glycosyl hydrolase 20 family.

It localises to the secreted. Its subcellular location is the cell wall. It catalyses the reaction Hydrolysis of terminal non-reducing N-acetyl-D-hexosamine residues in N-acetyl-beta-D-hexosaminides.. The sequence is that of Beta-N-acetylhexosaminidase (strH) from Streptococcus pneumoniae serotype 4 (strain ATCC BAA-334 / TIGR4).